The following is a 346-amino-acid chain: Alkylated DNA repair protein ALKBH8 homolog (346 aa).

The segment at 1-21 is disordered; the sequence is MVQPRFVRPTQSSPSSISGEP. A compositionally biased stretch (low complexity) spans 12–21; it reads SSPSSISGEP. Residues 24-102 form the RRM domain; it reads SNLYVANCGP…RSLHIRYSVL (79 aa). The region spanning 208-328 is the Fe2OG dioxygenase domain; sequence NLDQLTVNEY…RVSFTLRKVR (121 aa). Fe cation is bound by residues His226, Asp228, and His298. Arg319 and Arg325 together coordinate 2-oxoglutarate.

Belongs to the alkB family. It depends on Fe(2+) as a cofactor.

In terms of biological role, binds tRNA and catalyzes the iron and alpha-ketoglutarate dependent hydroxylation of 5-methylcarboxymethyl uridine at the wobble position of the anticodon loop in tRNA via its dioxygenase domain, giving rise to 5-(S)-methoxycarbonylhydroxymethyluridine. This chain is Alkylated DNA repair protein ALKBH8 homolog, found in Arabidopsis thaliana (Mouse-ear cress).